Here is a 169-residue protein sequence, read N- to C-terminus: Chorismate pyruvate-lyase (169 aa).

Substrate contacts are provided by Met35, Arg77, Leu115, and Glu156.

The protein belongs to the UbiC family. Monomer.

It localises to the cytoplasm. It catalyses the reaction chorismate = 4-hydroxybenzoate + pyruvate. It participates in cofactor biosynthesis; ubiquinone biosynthesis. In terms of biological role, removes the pyruvyl group from chorismate, with concomitant aromatization of the ring, to provide 4-hydroxybenzoate (4HB) for the ubiquinone pathway. The chain is Chorismate pyruvate-lyase from Cronobacter sakazakii (strain ATCC BAA-894) (Enterobacter sakazakii).